Here is a 957-residue protein sequence, read N- to C-terminus: Calsyntenin-3 (957 aa).

The signal sequence occupies residues 1–19 (MTPLLFPLLLASLLPSSSC). Topologically, residues 20-848 (NKANKHKPWI…SHRNSMVPSA (829 aa)) are extracellular. Cadherin domains follow at residues 29–145 (IEAE…APVF) and 146–246 (VERL…KPSW). N-linked (GlcNAc...) asparagine glycosylation is found at Asn299, Asn347, and Asn508. A helical membrane pass occupies residues 849 to 869 (ATLIIVVCVGFLVLMVVLGLV). Topologically, residues 870-957 (RIHSLHRRVS…RIIETPPHRY (88 aa)) are cytoplasmic. Positions 919–957 (CVAGAAGGQQDDEDSSDSEAADSPSSDERRIIETPPHRY) are disordered. The span at 928-938 (QDDEDSSDSEA) shows a compositional bias: acidic residues. Basic and acidic residues predominate over residues 944 to 957 (SDERRIIETPPHRY).

It belongs to the calsyntenin family. In terms of assembly, interacts (via cadherin domains) with both alpha and beta isoforms of neurexins (NRXN1, NRXN2 and NRXN3). Directly interacts with APBA2. Forms a tripartite complex with APBA2 and APP. Interacts with low affinity with KLC1. Interacts with SLC23A2/SVCT2. Proteolytically processed under normal cellular conditions. A primary zeta-cleavage generates a large extracellular (soluble) N-terminal domain (sAlc) and a short C-terminal transmembrane fragment (CTF1). A secondary cleavage catalyzed by gamma-secretase within the transmembrane domain releases the beta-Alc-beta chain in the extracellular milieu and produces an intracellular fragment (AlcICD). This processing is strongly suppressed in the tripartite complex formed with APBA2 and APP, which seems to prevent the association with gamma-secretase.

It localises to the postsynaptic cell membrane. Its subcellular location is the endoplasmic reticulum membrane. It is found in the golgi apparatus membrane. The protein resides in the cell projection. The protein localises to the dendrite. Its function is as follows. Postsynaptic adhesion molecule that binds to presynaptic neurexins to mediate both excitatory and inhibitory synapse formation. Promotes synapse development by acting as a cell adhesion molecule at the postsynaptic membrane, which associates with both neurexin-alpha and neurexin-beta proteins at the presynaptic membrane. Regulates the balance between excitatory and inhibitory synapses by inhibiting formation of excitatory parallel-fiber synapses and promoting formation of inhibitory synapses in the same neuron. May also be involved in ascorbate (vitamin C) uptake via its interaction with SLC23A2/SVCT2. Complex formation with APBA2 and APP, stabilizes APP metabolism and enhances APBA2-mediated suppression of beta-APP40 secretion, due to the retardation of intracellular APP maturation. The polypeptide is Calsyntenin-3 (CLSTN3) (Bos taurus (Bovine)).